Here is a 325-residue protein sequence, read N- to C-terminus: Acetyl-coenzyme A carboxylase carboxyl transferase subunit alpha (325 aa).

Residues 38–292 (RLEERLSKLQ…DGILKETLKS (255 aa)) enclose the CoA carboxyltransferase C-terminal domain.

This sequence belongs to the AccA family. As to quaternary structure, acetyl-CoA carboxylase is a heterohexamer composed of biotin carboxyl carrier protein (AccB), biotin carboxylase (AccC) and two subunits each of ACCase subunit alpha (AccA) and ACCase subunit beta (AccD).

It localises to the cytoplasm. The catalysed reaction is N(6)-carboxybiotinyl-L-lysyl-[protein] + acetyl-CoA = N(6)-biotinyl-L-lysyl-[protein] + malonyl-CoA. Its pathway is lipid metabolism; malonyl-CoA biosynthesis; malonyl-CoA from acetyl-CoA: step 1/1. Its function is as follows. Component of the acetyl coenzyme A carboxylase (ACC) complex. First, biotin carboxylase catalyzes the carboxylation of biotin on its carrier protein (BCCP) and then the CO(2) group is transferred by the carboxyltransferase to acetyl-CoA to form malonyl-CoA. The sequence is that of Acetyl-coenzyme A carboxylase carboxyl transferase subunit alpha from Bacillus velezensis (strain DSM 23117 / BGSC 10A6 / LMG 26770 / FZB42) (Bacillus amyloliquefaciens subsp. plantarum).